The primary structure comprises 288 residues: MLVTEQIDALRAVIREHRQQGKRIAFVPTMGNLHNGHLTLVREAKNHADVVIVSIFVNPMQFDRAEDLVNYPRTLSDDCALLEQEGVTAVFTPTPAIMYPQGLETQTFVEVPEISYLLEGAMRPGHFRGVSTVVTKLFNIVQPDVACFGQKDYQQLALIRKMVRDMTMPIEIIGVPTVRAEDGLALSSRNGYLTAEERLIAPTLAKVMGWIGEQLPARQTAIPALITEAADKLNSAGFRTDAIDIVDAETLLPLSGQSTEAVILMAAWLGNRARLIDNLVVNLRATTR.

30 to 37 is an ATP binding site; it reads MGNLHNGH. The active-site Proton donor is the His37. Gln61 is a (R)-pantoate binding site. Gln61 provides a ligand contact to beta-alanine. Residue 149 to 152 coordinates ATP; sequence GQKD. Gln155 lines the (R)-pantoate pocket. Residues Val178 and 186–189 contribute to the ATP site; that span reads LSSR.

The protein belongs to the pantothenate synthetase family. Homodimer.

Its subcellular location is the cytoplasm. It catalyses the reaction (R)-pantoate + beta-alanine + ATP = (R)-pantothenate + AMP + diphosphate + H(+). The protein operates within cofactor biosynthesis; (R)-pantothenate biosynthesis; (R)-pantothenate from (R)-pantoate and beta-alanine: step 1/1. In terms of biological role, catalyzes the condensation of pantoate with beta-alanine in an ATP-dependent reaction via a pantoyl-adenylate intermediate. In Tolumonas auensis (strain DSM 9187 / NBRC 110442 / TA 4), this protein is Pantothenate synthetase.